The primary structure comprises 182 residues: Large ribosomal subunit protein bL25 (182 aa).

The protein belongs to the bacterial ribosomal protein bL25 family. CTC subfamily. In terms of assembly, part of the 50S ribosomal subunit; part of the 5S rRNA/L5/L18/L25 subcomplex. Contacts the 5S rRNA. Binds to the 5S rRNA independently of L5 and L18.

In terms of biological role, this is one of the proteins that binds to the 5S RNA in the ribosome where it forms part of the central protuberance. The protein is Large ribosomal subunit protein bL25 of Borrelia hermsii (strain HS1 / DAH).